A 222-amino-acid chain; its full sequence is Elongation factor 1-beta' (222 aa).

Residues 71 to 113 (SQGTSPLTAGAKPTAPAPAAKDDDDDDVDLFGSGDEEEDAEAE) form a disordered region. The span at 78-89 (TAGAKPTAPAPA) shows a compositional bias: low complexity. The segment covering 92 to 111 (DDDDDDVDLFGSGDEEEDAE) has biased composition (acidic residues).

It belongs to the EF-1-beta/EF-1-delta family. EF-1 is composed of 4 subunits: alpha, beta, beta' and gamma. In terms of processing, phosphorylated.

EF-1-beta and EF-1-beta' stimulate the exchange of GDP bound to EF-1-alpha to GTP. This Bombyx mori (Silk moth) protein is Elongation factor 1-beta'.